A 115-amino-acid chain; its full sequence is Pro-FMRFamide-related neuropeptide FF (115 aa).

A signal peptide spans 1-22 (MDARQAAALLLVLLLVTDWSHA). Disordered regions lie at residues 20–51 (SHAEGPGGRDGGDQIFMEEDSGAHPAQDAQTP) and 78–102 (FGRNTRGSWSNKRLSPRAGEGLSSP). Positions 23–66 (EGPGGRDGGDQIFMEEDSGAHPAQDAQTPRSLLRSLLQAMQRPG) are excised as a propeptide. Phenylalanine 78 carries the post-translational modification Phenylalanine amide. Residues 81 to 94 (NTRGSWSNKRLSPR) constitute a propeptide that is removed on maturation. Phenylalanine 112 carries the phenylalanine amide modification.

Belongs to the FARP (FMRFamide related peptide) family.

It localises to the secreted. Morphine modulating peptides. Have wide-ranging physiologic effects, including the modulation of morphine-induced analgesia, elevation of arterial blood pressure, and increased somatostatin secretion from the pancreas. The neuropeptide FF potentiates and sensitizes ASIC3 cation channel. This chain is Pro-FMRFamide-related neuropeptide FF (NPFF), found in Bos taurus (Bovine).